The chain runs to 441 residues: MTQPSLSVLYSDHLRTLTARADQALQRGGFDHLVIPSGTTHYQLFDDRDYPFAVNPQFKAWVPLTRMPHSWLVYTPGKRPTVIFYQPFDYWHVVPDAPSGWWVEHCDIHIIRTPEAALPLLPARTERCAILGEAASALGACVPNNPAAVLDFLDYQRAFKTPYELAVMRLAQQLAVRGHRAAEAAFRAGQSEFGIHMAYCSAVGQDANELPYGNIIALNEHGAVLHYTELGRQAPQPLRSFLIDAGASAHGYASDITRTYAADAGSEFQALIDAVDAAQLRMGNAVRAGVDYKQLHVDAHLSLMGILHDFGIITVSPEAALATGVSAAFFPHGLGHLIGLQVHDVAGFAASDRGGRIERPDGHPYLRLTRMLEPGMVVTIEPGVYFIDMLLDEVKKNGHAASVNWDRVAQFAPYGGIRIEDEVVCTDGAPENLTRPVFAAP.

Residues Asp-244, Asp-255, His-336, Glu-381, and Glu-420 each contribute to the Mn(2+) site.

It belongs to the peptidase M24B family. Bacterial-type prolidase subfamily. Requires Mn(2+) as cofactor.

It catalyses the reaction Xaa-L-Pro dipeptide + H2O = an L-alpha-amino acid + L-proline. Functionally, splits dipeptides with a prolyl residue in the C-terminal position. In Xanthomonas campestris pv. campestris (strain B100), this protein is Xaa-Pro dipeptidase.